Reading from the N-terminus, the 465-residue chain is E3 ubiquitin-protein ligase ORTHRUS-LIKE 1 (465 aa).

Residues 31–69 (TSLSSPLDRSGDVDPLPVSDESGGSKADESMTDADETKK) are disordered. The RING-type zinc-finger motif lies at 109-148 (CSLCNQLPDRPVTILCGHNFCLKCFDKWIDQGNQICATCR). Positions 233–374 (VRNQGVLVGE…FKVCRYLFVR (142 aa)) constitute a YDG domain. Residues 442–462 (MAMTCLLLFVLIILVGSSSIL) traverse the membrane as a helical segment.

The protein localises to the nucleus. The protein resides in the membrane. It carries out the reaction S-ubiquitinyl-[E2 ubiquitin-conjugating enzyme]-L-cysteine + [acceptor protein]-L-lysine = [E2 ubiquitin-conjugating enzyme]-L-cysteine + N(6)-ubiquitinyl-[acceptor protein]-L-lysine.. It participates in protein modification; protein ubiquitination. Functionally, E3 ubiquitin-protein ligase. May participate in methylation-dependent transcriptional regulation. Mediates ubiquitination with the E2 ubiquitin-conjugating enzyme UBC11. The polypeptide is E3 ubiquitin-protein ligase ORTHRUS-LIKE 1 (ORTHL) (Arabidopsis thaliana (Mouse-ear cress)).